A 222-amino-acid chain; its full sequence is 3-demethoxyubiquinol 3-hydroxylase (222 aa).

Residues glutamate 71, glutamate 101, histidine 104, glutamate 153, glutamate 185, and histidine 188 each coordinate Fe cation.

It belongs to the COQ7 family. Requires Fe cation as cofactor.

The protein localises to the cell membrane. The enzyme catalyses a 5-methoxy-2-methyl-3-(all-trans-polyprenyl)benzene-1,4-diol + AH2 + O2 = a 3-demethylubiquinol + A + H2O. It functions in the pathway cofactor biosynthesis; ubiquinone biosynthesis. Its function is as follows. Catalyzes the hydroxylation of 2-nonaprenyl-3-methyl-6-methoxy-1,4-benzoquinol during ubiquinone biosynthesis. This Bordetella bronchiseptica (strain ATCC BAA-588 / NCTC 13252 / RB50) (Alcaligenes bronchisepticus) protein is 3-demethoxyubiquinol 3-hydroxylase.